The following is a 314-amino-acid chain: Mitochondrial 2-oxoglutarate/malate carrier protein (314 aa).

At A2 the chain carries N-acetylalanine. S6 is subject to Phosphoserine. Solcar repeat units follow at residues 23–108 (VKFL…LFER), 117–208 (PGFL…SKQF), and 217–306 (DNIL…MNKA). A helical membrane pass occupies residues 24 to 42 (KFLFGGLAGMGATVFVQPL). The residue at position 57 (K57) is an N6-succinyllysine. K73 carries the post-translational modification N6-acetyllysine. Residues 83 to 101 (GLSAGLLRQATYTTTRLGI) form a helical membrane-spanning segment. Y102 is subject to Phosphotyrosine. 3 consecutive transmembrane segments (helical) span residues 119–140 (FLLK…GTPA), 183–202 (GCIP…LASY), and 222–240 (HFCA…SMPV). An N6-acetyllysine modification is found at K256. The chain crosses the membrane as a helical span at residues 281 to 300 (GFTPYYARLGPHTVLTFIFL).

It belongs to the mitochondrial carrier (TC 2.A.29) family. As to quaternary structure, interacts with SMIM26. In terms of tissue distribution, most highly expressed in the heart.

The protein localises to the mitochondrion inner membrane. It carries out the reaction (S)-malate(in) + 2-oxoglutarate(out) = (S)-malate(out) + 2-oxoglutarate(in). The enzyme catalyses malonate(in) + 2-oxoglutarate(out) = malonate(out) + 2-oxoglutarate(in). It catalyses the reaction succinate(in) + 2-oxoglutarate(out) = succinate(out) + 2-oxoglutarate(in). The catalysed reaction is maleate(in) + 2-oxoglutarate(out) = maleate(out) + 2-oxoglutarate(in). It carries out the reaction oxaloacetate(in) + 2-oxoglutarate(out) = oxaloacetate(out) + 2-oxoglutarate(in). Functionally, catalyzes the transport of 2-oxoglutarate (alpha-oxoglutarate) across the inner mitochondrial membrane in an electroneutral exchange for malate. Can also exchange 2-oxoglutarate for other dicarboxylic acids such as malonate, succinate, maleate and oxaloacetate, although with lower affinity. Contributes to several metabolic processes, including the malate-aspartate shuttle, the oxoglutarate/isocitrate shuttle, in gluconeogenesis from lactate, and in nitrogen metabolism. Maintains mitochondrial fusion and fission events, and the organization and morphology of cristae. Involved in the regulation of apoptosis. Helps protect from cytotoxic-induced apoptosis by modulating glutathione levels in mitochondria. This is Mitochondrial 2-oxoglutarate/malate carrier protein (SLC25A11) from Homo sapiens (Human).